A 341-amino-acid chain; its full sequence is Fructose-1,6-bisphosphatase class 1 1 (341 aa).

4 residues coordinate Mg(2+): glutamate 92, aspartate 114, leucine 116, and aspartate 117. Residues 117–120 (DGSS), asparagine 209, and lysine 275 contribute to the substrate site. Residue glutamate 281 participates in Mg(2+) binding.

The protein belongs to the FBPase class 1 family. In terms of assembly, homotetramer. It depends on Mg(2+) as a cofactor.

It is found in the cytoplasm. The enzyme catalyses beta-D-fructose 1,6-bisphosphate + H2O = beta-D-fructose 6-phosphate + phosphate. Its pathway is carbohydrate biosynthesis; gluconeogenesis. The chain is Fructose-1,6-bisphosphatase class 1 1 from Leptothrix cholodnii (strain ATCC 51168 / LMG 8142 / SP-6) (Leptothrix discophora (strain SP-6)).